The primary structure comprises 182 residues: MSPTPDKQANADAPVAVAPAPGPVSQWLSQQGFEHELLEPDHVGVEQIAVEALFLPVIAAALKSHGFDYLQCQGGYDEGPGERLVCFYHLLAMAEVAEGSADQVREVRLKVFLSREGQPSVPSLYGLFRGADWQERETFDMFGIQFEGHPHPKRLLMPEDWTGWPLRKDYVQPDFYEMQDAY.

Belongs to the complex I 30 kDa subunit family. NDH-1 can be composed of about 15 different subunits; different subcomplexes with different compositions have been identified which probably have different functions.

It is found in the cellular thylakoid membrane. The enzyme catalyses a plastoquinone + NADH + (n+1) H(+)(in) = a plastoquinol + NAD(+) + n H(+)(out). It catalyses the reaction a plastoquinone + NADPH + (n+1) H(+)(in) = a plastoquinol + NADP(+) + n H(+)(out). In terms of biological role, NDH-1 shuttles electrons from an unknown electron donor, via FMN and iron-sulfur (Fe-S) centers, to quinones in the respiratory and/or the photosynthetic chain. The immediate electron acceptor for the enzyme in this species is believed to be plastoquinone. Couples the redox reaction to proton translocation, and thus conserves the redox energy in a proton gradient. Cyanobacterial NDH-1 also plays a role in inorganic carbon-concentration. The sequence is that of NAD(P)H-quinone oxidoreductase subunit J from Synechococcus sp. (strain WH7803).